A 52-amino-acid polypeptide reads, in one-letter code: ATP synthase F(1) complex subunit epsilon, mitochondrial (52 aa).

Residues K21, K32, and K37 each carry the N6-acetyllysine; alternate modification. N6-succinyllysine; alternate occurs at positions 21, 32, and 37. Position 44 is an N6-acetyllysine (K44).

The protein belongs to the eukaryotic ATPase epsilon family. In terms of assembly, component of the ATP synthase complex composed at least of ATP5F1A/subunit alpha, ATP5F1B/subunit beta, ATP5MC1/subunit c (homooctomer), MT-ATP6/subunit a, MT-ATP8/subunit 8, ATP5ME/subunit e, ATP5MF/subunit f, ATP5MG/subunit g, ATP5MK/subunit k, ATP5MJ/subunit j, ATP5F1C/subunit gamma, ATP5F1D/subunit delta, ATP5F1E/subunit epsilon, ATP5PF/subunit F6, ATP5PB/subunit b, ATP5PD/subunit d, ATP5PO/subunit OSCP. ATP synthase complex consists of a soluble F(1) head domain (subunits alpha(3) and beta(3)) - the catalytic core - and a membrane F(0) domain - the membrane proton channel (subunits c, a, 8, e, f, g, k and j). These two domains are linked by a central stalk (subunits gamma, delta, and epsilon) rotating inside the F1 region and a stationary peripheral stalk (subunits F6, b, d, and OSCP).

It is found in the mitochondrion. The protein resides in the mitochondrion inner membrane. In terms of biological role, subunit epsilon, of the mitochondrial membrane ATP synthase complex (F(1)F(0) ATP synthase or Complex V) that produces ATP from ADP in the presence of a proton gradient across the membrane which is generated by electron transport complexes of the respiratory chain. ATP synthase complex consist of a soluble F(1) head domain - the catalytic core - and a membrane F(1) domain - the membrane proton channel. These two domains are linked by a central stalk rotating inside the F(1) region and a stationary peripheral stalk. During catalysis, ATP synthesis in the catalytic domain of F(1) is coupled via a rotary mechanism of the central stalk subunits to proton translocation. In vivo, can only synthesize ATP although its ATP hydrolase activity can be activated artificially in vitro. May be essential for the assembly of F(1) and may play an important role in the incorporation of the hydrophobic subunit c into the F(1)-c oligomer rotor of the mitochondrial ATP synthase complex. The polypeptide is ATP synthase F(1) complex subunit epsilon, mitochondrial (Mus musculus (Mouse)).